The sequence spans 929 residues: uncharacterized protein (929 aa).

Positions 1–257 (MARKGKVNTL…SVLSSDDNDS (257 aa)) are disordered. The segment covering 23 to 34 (KQLENKILHSYE) has biased composition (basic and acidic residues). Composition is skewed to acidic residues over residues 35–50 (EESA…DNDE), 59–75 (SEDD…DEED), 107–117 (LNEEDDSDDSV), 133–144 (DENELVDLDTLL), and 188–220 (SESE…DGEN). A phosphoserine mark is found at Ser251, Ser555, and Ser557. Positions 602 to 729 (DEMQAFEDEL…KADKKNHKLK (128 aa)) are disordered. A compositionally biased stretch (acidic residues) spans 605–619 (QAFEDELAGVPNEDD). Residues 670–681 (NKPEMKEGQKKA) show a composition bias toward basic and acidic residues. Residues 696-711 (ETNPWLQVPDQRTSSA) are compositionally biased toward polar residues. The segment covering 712–729 (KKLDKNSSKADKKNHKLK) has biased composition (basic and acidic residues). Ser758, Ser760, and Ser764 each carry phosphoserine. Positions 805–820 (KEDWVQEDAPKEEDHS) are enriched in basic and acidic residues. Residues 805 to 843 (KEDWVQEDAPKEEDHSLPGWGSWGGVGVKQRKTKPKVKK) form a disordered region. Positions 833-843 (KQRKTKPKVKK) are enriched in basic residues.

This sequence to yeast YML093w.

It is found in the nucleus. It localises to the nucleolus. This is an uncharacterized protein from Schizosaccharomyces pombe (strain 972 / ATCC 24843) (Fission yeast).